The chain runs to 232 residues: Large ribosomal subunit protein uL1 (232 aa).

This sequence belongs to the universal ribosomal protein uL1 family. Part of the 50S ribosomal subunit.

Functionally, binds directly to 23S rRNA. The L1 stalk is quite mobile in the ribosome, and is involved in E site tRNA release. Its function is as follows. Protein L1 is also a translational repressor protein, it controls the translation of the L11 operon by binding to its mRNA. This chain is Large ribosomal subunit protein uL1, found in Rhizobium meliloti (strain 1021) (Ensifer meliloti).